The primary structure comprises 622 residues: Probable ATP-dependent RNA helicase DDX41 (622 aa).

Over residues Met1 to Glu15 the composition is skewed to basic and acidic residues. Disordered regions lie at residues Met1 to Leu39 and Leu51 to Asn84. Ser4 carries the phosphoserine modification. Position 9 is an N6-acetyllysine (Lys9). A Glycyl lysine isopeptide (Lys-Gly) (interchain with G-Cter in ubiquitin) cross-link involves residue Lys9. A phosphoserine mark is found at Ser21 and Ser23. The segment covering Glu24–Tyr33 has biased composition (acidic residues). Position 33 is a phosphotyrosine (Tyr33). Lys115 is covalently cross-linked (Glycyl lysine isopeptide (Lys-Gly) (interchain with G-Cter in ubiquitin)). A Q motif motif is present at residues Lys181 to Ile209. The Helicase ATP-binding domain occupies Ile212 to Ile396. Position 225–232 (Ala225–Thr232) interacts with ATP. The DEAD box motif lies at Asp344–Asp347. One can recognise a Helicase C-terminal domain in the interval Asp407–His567. A Phosphotyrosine modification is found at Tyr414. Glycyl lysine isopeptide (Lys-Gly) (interchain with G-Cter in SUMO2) cross-links involve residues Lys416 and Lys442. The CCHC-type zinc finger occupies Arg580–Lys597.

Belongs to the DEAD box helicase family. DDX41 subfamily. As to quaternary structure, identified in the spliceosome C complex. Interacts with ERCC6. Interacts with FAM50A. Interacts with STING1. Interacts with CGAS. Interacts with several spliceosomes components such as PRP19 or CDC5L. In terms of processing, acetylation at Lys-9 regulates the nuclear/cytoplasmic localization. Phosphorylated by BTK; phosphorylation induces binding to dsDNA and STING1. Post-translationally, 'Lys-48'-linked ubiquitinated and degraded by TRIM21 leading to negative regulation of the innate immune response to intracellular dsDNA.

It localises to the nucleus. It is found in the cytoplasm. The enzyme catalyses ATP + H2O = ADP + phosphate + H(+). Multifunctional protein that participates in many aspects of cellular RNA metabolism. Plays pivotal roles in innate immune sensing and hematopoietic homeostasis. Recognizes foreign or self-nucleic acids generated during microbial infection, thereby initiating anti-pathogen responses. Mechanistically, phosphorylation by BTK allows binding to dsDNA leading to interaction with STING1. Modulates the homeostasis of dsDNA through its ATP-dependent DNA-unwinding activity and ATP-independent strand-annealing activity. In turn, induces STING1-mediated type I interferon and cytokine responses to DNA and DNA viruses. During murine leukemia virus infection, primarily senses the DNA/RNA hybrid generated at the first step of reverse transcription, while cGAS recognizes dsDNA generated at the next step and both are needed for the antiretroviral innate immune response. Selectively modulates the transcription of certain immunity-associated genes by regulating their alternative splicing. Binds to RNA (R)-loops, structures consisting of DNA/RNA hybrids and a displaced strand of DNA that occur during transcription, and prevents their accumulation, thereby maintaining genome stability. Also participates in pre-mRNA splicing, translational regulation and snoRNA processing, which is essential for ribosome biogenesis. This Mus musculus (Mouse) protein is Probable ATP-dependent RNA helicase DDX41 (Ddx41).